The chain runs to 447 residues: UPF0210 protein LSEI_0897 (447 aa).

This sequence belongs to the UPF0210 family. As to quaternary structure, homodimer.

In Lacticaseibacillus paracasei (strain ATCC 334 / BCRC 17002 / CCUG 31169 / CIP 107868 / KCTC 3260 / NRRL B-441) (Lactobacillus paracasei), this protein is UPF0210 protein LSEI_0897.